We begin with the raw amino-acid sequence, 170 residues long: MDPLKLENYLTFRAIIRGSTLSPGFFRRWCFPALADVVGNIVVQEEGRFWQILPENHAFWGLLRRGFTVASFTEIITAAQLENERLSRQLAFLAFISFLLRNWPSDSLVPEADRLDLVCAPAWSRMQIWTQTARLINDLQDSVLEEQGSAEEEECEEALLAGDSDDPLFG.

It belongs to the adenoviridae E1B 19 kDa protein family.

The sequence is that of E1B protein, small T-antigen from Canine adenovirus serotype 2 (CAdV-2).